Here is a 54-residue protein sequence, read N- to C-terminus: ATP synthase protein 8 (54 aa).

A helical membrane pass occupies residues 9 to 29 (WIINFFIVWTADFTLLIVLSI).

The protein belongs to the ATPase protein 8 family. In terms of assembly, F-type ATPases have 2 components, CF(1) - the catalytic core - and CF(0) - the membrane proton channel.

It localises to the mitochondrion membrane. In terms of biological role, mitochondrial membrane ATP synthase (F(1)F(0) ATP synthase or Complex V) produces ATP from ADP in the presence of a proton gradient across the membrane which is generated by electron transport complexes of the respiratory chain. F-type ATPases consist of two structural domains, F(1) - containing the extramembraneous catalytic core and F(0) - containing the membrane proton channel, linked together by a central stalk and a peripheral stalk. During catalysis, ATP synthesis in the catalytic domain of F(1) is coupled via a rotary mechanism of the central stalk subunits to proton translocation. Part of the complex F(0) domain. Minor subunit located with subunit a in the membrane. This Arbacia lixula (Black urchin) protein is ATP synthase protein 8 (MT-ATP8).